The chain runs to 300 residues: Fructose-bisphosphate aldolase class 1 (300 aa).

Catalysis depends on glutamate 181, which acts as the Proton acceptor. Catalysis depends on lysine 218, which acts as the Schiff-base intermediate with dihydroxyacetone-P.

Belongs to the class I fructose-bisphosphate aldolase family.

The catalysed reaction is beta-D-fructose 1,6-bisphosphate = D-glyceraldehyde 3-phosphate + dihydroxyacetone phosphate. It functions in the pathway carbohydrate degradation; glycolysis; D-glyceraldehyde 3-phosphate and glycerone phosphate from D-glucose: step 4/4. The chain is Fructose-bisphosphate aldolase class 1 (fda) from Synechocystis sp. (strain ATCC 27184 / PCC 6803 / Kazusa).